The following is a 255-amino-acid chain: Homeobox protein Hox-D4 (255 aa).

The segment at 31-128 (EQGADYYGGG…KQPPPGTALK (98 aa)) is disordered. Positions 94-109 (EPCPAPPAPPPAPLPG) are enriched in pro residues. Positions 133-138 (VYPWMK) match the Antp-type hexapeptide motif. Positions 154–213 (PKRSRTAYTRQQVLELEKEFHFNRYLTRRRRIEIAHTLCLSERQIKIWFQNRRMKWKKDH) form a DNA-binding region, homeobox. The interval 212–255 (DHKLPNTKGRSSSSSSSSSCSSSVAPSQHLQPMAKDHHTDLTTL) is disordered. Residues 222–234 (SSSSSSSSSCSSS) show a composition bias toward low complexity. Residues 245-255 (AKDHHTDLTTL) are compositionally biased toward basic and acidic residues.

This sequence belongs to the Antp homeobox family. Deformed subfamily. Forms a DNA-binding heterodimer with transcription factor PBX1.

It localises to the nucleus. Its function is as follows. Sequence-specific transcription factor which is part of a developmental regulatory system that provides cells with specific positional identities on the anterior-posterior axis. The protein is Homeobox protein Hox-D4 (HOXD4) of Gorilla gorilla gorilla (Western lowland gorilla).